A 480-amino-acid chain; its full sequence is Serine/threonine-protein kinase WAG2 (480 aa).

One can recognise a Protein kinase domain in the interval 88 to 396 (LKLIRHLGTG…AQDIKRHPFF (309 aa)). Residues 94 to 102 (LGTGNLGRV) and lysine 117 contribute to the ATP site. The Proton acceptor role is filled by aspartate 213.

It belongs to the protein kinase superfamily. Ser/Thr protein kinase family. In terms of tissue distribution, expressed in root tips, lateral root primordia and emerging true leaf primordia.

The protein resides in the cytoplasm. It is found in the cytosol. It carries out the reaction L-seryl-[protein] + ATP = O-phospho-L-seryl-[protein] + ADP + H(+). The enzyme catalyses L-threonyl-[protein] + ATP = O-phospho-L-threonyl-[protein] + ADP + H(+). Its function is as follows. Serine/threonine-protein kinase involved in the regulation of auxin signaling. Acts as a positive regulator of cellular auxin efflux and regulates organ development by enhancing PIN-mediated polar auxin transport. Phosphorylates conserved serine residues in the PIN auxin efflux carriers. Phosphorylation of PIN proteins is required and sufficient for apical-basal PIN polarity that enables directional intercellular auxin fluxes, which mediate differential growth, tissue patterning and organogenesis. Acts as a suppressor of root waving. In Arabidopsis thaliana (Mouse-ear cress), this protein is Serine/threonine-protein kinase WAG2 (WAG2).